The primary structure comprises 424 residues: Adenylosuccinate synthetase 1 (424 aa).

GTP contacts are provided by residues 12-18 (GDEGKGK) and 40-42 (GHT). The active-site Proton acceptor is Asp13. Residues Asp13 and Gly40 each coordinate Mg(2+). IMP contacts are provided by residues 13–16 (DEGK), 38–41 (NAGH), Thr127, Arg141, Thr236, and Arg304. The active-site Proton donor is the His41. Residue 300 to 306 (ARTGRPR) participates in substrate binding. GTP-binding positions include Arg306, 332-334 (KLD), and 413-415 (GVG).

Belongs to the adenylosuccinate synthetase family. Homodimer. Requires Mg(2+) as cofactor.

The protein resides in the cytoplasm. The catalysed reaction is IMP + L-aspartate + GTP = N(6)-(1,2-dicarboxyethyl)-AMP + GDP + phosphate + 2 H(+). Its pathway is purine metabolism; AMP biosynthesis via de novo pathway; AMP from IMP: step 1/2. In terms of biological role, plays an important role in the de novo pathway of purine nucleotide biosynthesis. Catalyzes the first committed step in the biosynthesis of AMP from IMP. This Methanosarcina acetivorans (strain ATCC 35395 / DSM 2834 / JCM 12185 / C2A) protein is Adenylosuccinate synthetase 1.